Here is a 343-residue protein sequence, read N- to C-terminus: Dihydroorotase (343 aa).

The Zn(2+) site is built by His13 and His15. Substrate is bound by residues 15 to 17 and Asn41; that span reads HLR. Lys99, His136, and His174 together coordinate Zn(2+). Lys99 is subject to N6-carboxylysine. His136 contacts substrate. Leu219 contacts substrate. Position 247 (Asp247) interacts with Zn(2+). Asp247 is a catalytic residue. Residues His251 and Ala263 each contribute to the substrate site.

This sequence belongs to the metallo-dependent hydrolases superfamily. DHOase family. Class II DHOase subfamily. Homodimer. Zn(2+) serves as cofactor.

The enzyme catalyses (S)-dihydroorotate + H2O = N-carbamoyl-L-aspartate + H(+). It functions in the pathway pyrimidine metabolism; UMP biosynthesis via de novo pathway; (S)-dihydroorotate from bicarbonate: step 3/3. Its function is as follows. Catalyzes the reversible cyclization of carbamoyl aspartate to dihydroorotate. In Shewanella sp. (strain ANA-3), this protein is Dihydroorotase.